Reading from the N-terminus, the 197-residue chain is Transcription factor FapR (197 aa).

The protein belongs to the FapR family.

Transcriptional factor involved in regulation of membrane lipid biosynthesis by repressing genes involved in fatty acid and phospholipid metabolism. The sequence is that of Transcription factor FapR from Bacillus mycoides (strain KBAB4) (Bacillus weihenstephanensis).